The sequence spans 456 residues: Arginine biosynthesis bifunctional protein ArgJ, mitochondrial (456 aa).

Substrate-binding residues include T184, K213, T224, E311, N451, and T456. The Nucleophile role is filled by T224.

Belongs to the ArgJ family. As to quaternary structure, heterodimer of an alpha and a beta chain. The alpha and beta chains are autoproteolytically processed from a single precursor protein within the mitochondrion.

The protein localises to the mitochondrion matrix. The enzyme catalyses N(2)-acetyl-L-ornithine + L-glutamate = N-acetyl-L-glutamate + L-ornithine. The catalysed reaction is L-glutamate + acetyl-CoA = N-acetyl-L-glutamate + CoA + H(+). It participates in amino-acid biosynthesis; L-arginine biosynthesis; L-ornithine and N-acetyl-L-glutamate from L-glutamate and N(2)-acetyl-L-ornithine (cyclic): step 1/1. It functions in the pathway amino-acid biosynthesis; L-arginine biosynthesis; N(2)-acetyl-L-ornithine from L-glutamate: step 1/4. Functionally, catalyzes two activities which are involved in the cyclic version of arginine biosynthesis: the synthesis of acetylglutamate from glutamate and acetyl-CoA, and of ornithine by transacetylation between acetylornithine and glutamate. This Aspergillus niger (strain ATCC MYA-4892 / CBS 513.88 / FGSC A1513) protein is Arginine biosynthesis bifunctional protein ArgJ, mitochondrial.